The primary structure comprises 295 residues: uncharacterized protein (295 aa).

An HTH araC/xylS-type domain is found at Q8–F106. Positions E25–V46 form a DNA-binding region, H-T-H motif.

Probable transcriptional regulator. This is an uncharacterized protein from Bacillus subtilis (strain 168).